The primary structure comprises 217 residues: Pro-Pro endopeptidase (217 aa).

An N-terminal signal peptide occupies residues 1 to 27 (MKWDKRVVALILAVMIVCPLFAAPAHA). The region spanning 30–216 (QSILDKLVVL…TYEFMAKLFA (187 aa)) is the ATLF-like domain. The tract at residues 112-115 (SERV) is plays a crucial role in substrate specificity. Zn(2+) is bound at residue His137. Catalysis depends on Glu138, which acts as the Proton acceptor. Residues His141, Tyr174, and Glu181 each coordinate Zn(2+).

It belongs to the peptidase M34 family. Pro-Pro endopeptidase subfamily. As to quaternary structure, monomer. Zn(2+) serves as cofactor.

It localises to the secreted. It carries out the reaction The enzyme catalyzes the hydrolytic cleavage of peptide bonds between two proline residues.. Zinc-dependent endoprotease with a unique preference for proline residues surrounding the scissile bond, which cleaves in a PLP-|-PVP motif. Cleaves the cell surface protein encoded by an adjacent gene, which contains two PPEP-2 cleaving sites and putative extracellular matrix-binding domains. Thereby, may have a role in the regulation of P.alvei adhesion. Is not able to cleave within the PVP-|-PVQ motif, and only shows a very poor cleavage of the VNP-|-PVP motif in vitro, which is the optimal substrate peptide for PPEP-1 from P.difficile. This is Pro-Pro endopeptidase from Paenibacillus alvei (strain ATCC 6344 / DSM 29 / NBRC 3343 / NCIMB 9371 / NCTC 6352) (Bacillus alvei).